We begin with the raw amino-acid sequence, 274 residues long: Acyl-[acyl-carrier-protein]--UDP-N-acetylglucosamine O-acyltransferase (274 aa).

Belongs to the transferase hexapeptide repeat family. LpxA subfamily. In terms of assembly, homotrimer.

It is found in the cytoplasm. The catalysed reaction is a (3R)-hydroxyacyl-[ACP] + UDP-N-acetyl-alpha-D-glucosamine = a UDP-3-O-[(3R)-3-hydroxyacyl]-N-acetyl-alpha-D-glucosamine + holo-[ACP]. The protein operates within glycolipid biosynthesis; lipid IV(A) biosynthesis; lipid IV(A) from (3R)-3-hydroxytetradecanoyl-[acyl-carrier-protein] and UDP-N-acetyl-alpha-D-glucosamine: step 1/6. Its function is as follows. Involved in the biosynthesis of lipid A, a phosphorylated glycolipid that anchors the lipopolysaccharide to the outer membrane of the cell. The sequence is that of Acyl-[acyl-carrier-protein]--UDP-N-acetylglucosamine O-acyltransferase from Bartonella henselae (strain ATCC 49882 / DSM 28221 / CCUG 30454 / Houston 1) (Rochalimaea henselae).